Consider the following 255-residue polypeptide: Triosephosphate isomerase (255 aa).

15 to 17 (NWK) provides a ligand contact to substrate. Residue His100 is the Electrophile of the active site. The active-site Proton acceptor is Glu172. Substrate-binding positions include Gly178, Ser218, and 239-240 (GG).

This sequence belongs to the triosephosphate isomerase family. Homodimer.

Its subcellular location is the cytoplasm. The enzyme catalyses D-glyceraldehyde 3-phosphate = dihydroxyacetone phosphate. It functions in the pathway carbohydrate biosynthesis; gluconeogenesis. The protein operates within carbohydrate degradation; glycolysis; D-glyceraldehyde 3-phosphate from glycerone phosphate: step 1/1. In terms of biological role, involved in the gluconeogenesis. Catalyzes stereospecifically the conversion of dihydroxyacetone phosphate (DHAP) to D-glyceraldehyde-3-phosphate (G3P). The chain is Triosephosphate isomerase from Clostridium tetani (strain Massachusetts / E88).